The sequence spans 563 residues: uncharacterized protein (563 aa).

A DNA-binding region (zn(2)-C6 fungal-type) is located at residues 19 to 45 (CLICRRRKVKCDRQQPCSRCKERNEVC). Positions 56 to 78 (NVGPHPSHSENASDSETTLEVSP) are disordered. Positions 64-75 (SENASDSETTLE) are enriched in polar residues.

The protein resides in the nucleus. This is an uncharacterized protein from Schizosaccharomyces pombe (strain 972 / ATCC 24843) (Fission yeast).